A 73-amino-acid polypeptide reads, in one-letter code: NAD(P)H-quinone oxidoreductase subunit L (73 aa).

Helical transmembrane passes span 6 to 26 (SLIG…LPLL) and 44 to 64 (VLMF…APFM).

Belongs to the complex I NdhL subunit family. In terms of assembly, NDH-1 can be composed of about 15 different subunits; different subcomplexes with different compositions have been identified which probably have different functions.

It is found in the cellular thylakoid membrane. The enzyme catalyses a plastoquinone + NADH + (n+1) H(+)(in) = a plastoquinol + NAD(+) + n H(+)(out). The catalysed reaction is a plastoquinone + NADPH + (n+1) H(+)(in) = a plastoquinol + NADP(+) + n H(+)(out). In terms of biological role, NDH-1 shuttles electrons from an unknown electron donor, via FMN and iron-sulfur (Fe-S) centers, to quinones in the respiratory and/or the photosynthetic chain. The immediate electron acceptor for the enzyme in this species is believed to be plastoquinone. Couples the redox reaction to proton translocation, and thus conserves the redox energy in a proton gradient. Cyanobacterial NDH-1 also plays a role in inorganic carbon-concentration. This Synechococcus sp. (strain JA-2-3B'a(2-13)) (Cyanobacteria bacterium Yellowstone B-Prime) protein is NAD(P)H-quinone oxidoreductase subunit L.